The sequence spans 298 residues: Tyrosine recombinase XerC (298 aa).

The region spanning Met-1–Asn-85 is the Core-binding (CB) domain. Residues Arg-106–Asp-285 enclose the Tyr recombinase domain. Residues Arg-146, Lys-170, His-237, Arg-240, and His-263 contribute to the active site. Tyr-272 serves as the catalytic O-(3'-phospho-DNA)-tyrosine intermediate.

The protein belongs to the 'phage' integrase family. XerC subfamily. In terms of assembly, forms a cyclic heterotetrameric complex composed of two molecules of XerC and two molecules of XerD.

It is found in the cytoplasm. In terms of biological role, site-specific tyrosine recombinase, which acts by catalyzing the cutting and rejoining of the recombining DNA molecules. The XerC-XerD complex is essential to convert dimers of the bacterial chromosome into monomers to permit their segregation at cell division. It also contributes to the segregational stability of plasmids. The protein is Tyrosine recombinase XerC of Pseudomonas fluorescens (strain ATCC BAA-477 / NRRL B-23932 / Pf-5).